The chain runs to 444 residues: Phosphoribosylamine--glycine ligase (444 aa).

An ATP-grasp domain is found at Arg-109–Asn-324. Leu-140 to Thr-202 contacts ATP. Mg(2+)-binding residues include Gln-282, Glu-294, and Asn-296. Positions 282, 294, and 296 each coordinate Mn(2+).

This sequence belongs to the GARS family. It depends on Mg(2+) as a cofactor. Mn(2+) serves as cofactor.

The enzyme catalyses 5-phospho-beta-D-ribosylamine + glycine + ATP = N(1)-(5-phospho-beta-D-ribosyl)glycinamide + ADP + phosphate + H(+). The protein operates within purine metabolism; IMP biosynthesis via de novo pathway; N(1)-(5-phospho-D-ribosyl)glycinamide from 5-phospho-alpha-D-ribose 1-diphosphate: step 2/2. This Methanocaldococcus jannaschii (strain ATCC 43067 / DSM 2661 / JAL-1 / JCM 10045 / NBRC 100440) (Methanococcus jannaschii) protein is Phosphoribosylamine--glycine ligase.